The chain runs to 356 residues: OVARIAN TUMOR DOMAIN-containing deubiquitinating enzyme 10 (356 aa).

The interval 86–117 (DYSHQNQQQQHQQEGYTNNYSNNNNGYAWNDQ) is disordered. Low complexity predominate over residues 89–115 (HQNQQQQHQQEGYTNNYSNNNNGYAWN). Residues 213–337 (FTEVKVPGDG…EVHYNAIYLN (125 aa)) form the OTU domain. Residue D221 is part of the active site. Residue C224 is the Nucleophile of the active site. H330 is a catalytic residue.

The protein belongs to the peptidase C85 family.

The enzyme catalyses Thiol-dependent hydrolysis of ester, thioester, amide, peptide and isopeptide bonds formed by the C-terminal Gly of ubiquitin (a 76-residue protein attached to proteins as an intracellular targeting signal).. Its function is as follows. Hydrolase that can remove conjugated ubiquitin from proteins in vitro and may therefore play an important regulatory role at the level of protein turnover by preventing degradation. Cysteine protease with a preference for 'Lys-63' over 'Lys-48' over 'Met-1' -linked ubiquitin (UB) tetramers as substrates. Also cleaves RUB-GST fusion. The sequence is that of OVARIAN TUMOR DOMAIN-containing deubiquitinating enzyme 10 from Arabidopsis thaliana (Mouse-ear cress).